The chain runs to 114 residues: UPF0342 protein OEOE_0901 (114 aa).

This sequence belongs to the UPF0342 family.

The sequence is that of UPF0342 protein OEOE_0901 from Oenococcus oeni (strain ATCC BAA-331 / PSU-1).